We begin with the raw amino-acid sequence, 636 residues long: Putative cysteine-rich receptor-like protein kinase 33 (636 aa).

The signal sequence occupies residues Met-1 to Ser-25. Gnk2-homologous domains follow at residues Gln-26–Phe-128 and Tyr-138–Phe-245. The Extracellular segment spans residues Gln-26–Gly-266. N-linked (GlcNAc...) asparagine glycans are attached at residues Asn-29, Asn-63, Asn-105, Asn-125, Asn-149, Asn-173, Asn-185, Asn-188, Asn-250, and Asn-262. The chain crosses the membrane as a helical span at residues Phe-267–Val-287. Residues Val-288–Arg-636 are Cytoplasmic-facing. Residues Phe-321–Leu-600 enclose the Protein kinase domain. Residues Leu-327–Val-335 and Lys-349 each bind ATP. At Tyr-394 the chain carries Phosphotyrosine. Asp-446 acts as the Proton acceptor in catalysis. Ser-450 carries the phosphoserine modification. Thr-486 carries the phosphothreonine modification. At Tyr-494 the chain carries Phosphotyrosine.

This sequence belongs to the protein kinase superfamily. Ser/Thr protein kinase family. CRK subfamily.

The protein localises to the membrane. The enzyme catalyses L-seryl-[protein] + ATP = O-phospho-L-seryl-[protein] + ADP + H(+). The catalysed reaction is L-threonyl-[protein] + ATP = O-phospho-L-threonyl-[protein] + ADP + H(+). The protein is Putative cysteine-rich receptor-like protein kinase 33 (CRK33) of Arabidopsis thaliana (Mouse-ear cress).